The primary structure comprises 391 residues: Beta sliding clamp (391 aa).

This sequence belongs to the beta sliding clamp family. As to quaternary structure, forms a ring-shaped head-to-tail homodimer around DNA which binds and tethers DNA polymerases and other proteins to the DNA. The DNA replisome complex has a single clamp-loading complex (3 tau and 1 each of delta, delta', psi and chi subunits) which binds 3 Pol III cores (1 core on the leading strand and 2 on the lagging strand) each with a beta sliding clamp dimer. Additional proteins in the replisome are other copies of gamma, psi and chi, Ssb, DNA helicase and RNA primase.

The protein resides in the cytoplasm. In terms of biological role, confers DNA tethering and processivity to DNA polymerases and other proteins. Acts as a clamp, forming a ring around DNA (a reaction catalyzed by the clamp-loading complex) which diffuses in an ATP-independent manner freely and bidirectionally along dsDNA. Initially characterized for its ability to contact the catalytic subunit of DNA polymerase III (Pol III), a complex, multichain enzyme responsible for most of the replicative synthesis in bacteria; Pol III exhibits 3'-5' exonuclease proofreading activity. The beta chain is required for initiation of replication as well as for processivity of DNA replication. This Synechocystis sp. (strain ATCC 27184 / PCC 6803 / Kazusa) protein is Beta sliding clamp (dnaN).